A 728-amino-acid chain; its full sequence is Prolyl 3-hydroxylase 1 (728 aa).

Residues 1 to 14 (MVAVAAAAASRATA) form the signal peptide. 4 TPR repeats span residues 25 to 58 (PDLLYAEGTAAYARGDWPGVVLNMERALRSRAAL), 135 to 168 (RSPYNYLQVAYFKINKLEKAVAAAHTFFVGNPEH), 197 to 230 (HMHEFRLGVRLYSEEKPLEAVPHLEAALQEYFVA), and 293 to 326 (PSHYNYLQFAYYNIGNYTQAIECAKTYLLFFPND). The N-linked (GlcNAc...) asparagine glycan is linked to Asn-308. Residues 393–431 (KRLQEKQKSERETAVRISQEIGNLMKEIETLVEEKTKES) are a coiled coil. Asn-450, Asn-459, and Asn-532 each carry an N-linked (GlcNAc...) asparagine glycan. A Fe2OG dioxygenase domain is found at 556–670 (SHLVCRTAIE…RCAIALWFTL (115 aa)). Fe cation is bound by residues His-579, Asp-581, and His-651. Arg-661 is a catalytic residue. The tract at residues 691–728 (SPEEVDLPQEQPLPDQQGSPKPGEESLSDRESQPKDEL) is disordered. The segment covering 698–707 (PQEQPLPDQQ) has biased composition (low complexity). The span at 712-728 (PGEESLSDRESQPKDEL) shows a compositional bias: basic and acidic residues. The short motif at 725-728 (KDEL) is the Prevents secretion from ER element.

Belongs to the leprecan family. Fe cation serves as cofactor. L-ascorbate is required as a cofactor. Post-translationally, O-glycosylated; chondroitin sulfate. Expressed in basement membranes of cardiac muscle, skeletal muscle, central nervous system, intestinal tract, trachea, ear, skin, liver and kidney. In kidney, localizes to the glomerular basement membrane, mesangial matrix and Bowman's capsule of the nephron. In the renal parenchyma, expressed in the basement membranes of tubules and blood vessels. In the ear and trachea, localizes to the perimeter of resident chondrocytes in lacunae.

The protein resides in the endoplasmic reticulum. It localises to the secreted. Its subcellular location is the extracellular space. It is found in the extracellular matrix. It catalyses the reaction L-prolyl-[collagen] + 2-oxoglutarate + O2 = trans-3-hydroxy-L-prolyl-[collagen] + succinate + CO2. In terms of biological role, basement membrane-associated chondroitin sulfate proteoglycan (CSPG). Has prolyl 3-hydroxylase activity catalyzing the post-translational formation of 3-hydroxyproline in -Xaa-Pro-Gly- sequences in collagens, especially types IV and V. May be involved in the secretory pathway of cells. Has growth suppressive activity in fibroblasts. In Rattus norvegicus (Rat), this protein is Prolyl 3-hydroxylase 1.